We begin with the raw amino-acid sequence, 152 residues long: Allergen Asp f 15 (152 aa).

Positions 1 to 19 (MKFTTPISLISLFVSSALA) are cleaved as a signal peptide. 2 disulfides stabilise this stretch: Cys-53–Cys-90 and Cys-93–Cys-148.

This sequence belongs to the cerato-platanin family.

Its subcellular location is the secreted. The chain is Allergen Asp f 15 from Aspergillus fumigatus (strain ATCC MYA-4609 / CBS 101355 / FGSC A1100 / Af293) (Neosartorya fumigata).